A 481-amino-acid chain; its full sequence is MLKVLFTAAESAPFYKTGGLGDVTYALPKAIKKQGVDIRVAIPFYEKKFPAKYLPKVKDLTHFTLEMDGRPVYVGLKTIKLGDVTYYLIDNRQYFDRDGLYGYWDDGGRFGYFQMAVIEMLQVIEWIPDVIHANDWHTAFIPVLLKEKYGWIKPYQQIKTQLTIHNLQFQGWFPPSTLATVFGIGREGFNDDGFGQDGSINWLKGGINYADLVSTVSPSYAKEIQTPAFGEHLDGTLRKQSGKLVGILNGIDSEVYNPATDQNLAYNYDAKNLAGKAKDKKALQDEMHLPKRTDPLFAMVSRLTRQKGADLLVDALENFLVQNNVQVVVLGTGDQDLEEDLSSLQDRFPGQLAVRIDFDEGLAQRIYAGADYFMMPSAFEPSGLAQMMAMRYGTLPIVHETGGLRDSVLAYNAETGAGDGFSFWDYNAGVLTNILRMAKSVYADQPKVYAKLQQHAMVKDFDWHHSAAEYLKGYQRILGKA.

Lys-16 serves as a coordination point for ADP-alpha-D-glucose.

The protein belongs to the glycosyltransferase 1 family. Bacterial/plant glycogen synthase subfamily.

The enzyme catalyses [(1-&gt;4)-alpha-D-glucosyl](n) + ADP-alpha-D-glucose = [(1-&gt;4)-alpha-D-glucosyl](n+1) + ADP + H(+). The protein operates within glycan biosynthesis; glycogen biosynthesis. In terms of biological role, synthesizes alpha-1,4-glucan chains using ADP-glucose. This Lacticaseibacillus casei (strain BL23) (Lactobacillus casei) protein is Glycogen synthase.